Here is a 212-residue protein sequence, read N- to C-terminus: External core antigen (212 aa).

Residues 1–19 form the signal peptide; that stretch reads MQLFHLCLIISCSCPTVQA. The tract at residues 25-27 is HBEAG; sequence GWL. The interval 165–212 is disordered; sequence NAPILSTLPETTVVRRRGRSPRRRTPSPRRRRSQSPRRRRSQSRESQC. The span at 178-205 shows a compositional bias: basic residues; the sequence is VRRRGRSPRRRTPSPRRRRSQSPRRRRS. A 1; half-length repeat occupies 184-190; sequence SPRRRTP. The 3 X 8 AA repeats of S-P-R-R-R-R-S-Q stretch occupies residues 184 to 206; it reads SPRRRTPSPRRRRSQSPRRRRSQ. A propeptide spanning residues 184–212 is cleaved from the precursor; the sequence is SPRRRTPSPRRRRSQSPRRRRSQSRESQC. Repeat copies occupy residues 191–198 and 199–206.

The protein belongs to the orthohepadnavirus precore antigen family. Homodimerizes. Post-translationally, phosphorylated. In terms of processing, cleaved by host furin.

The protein localises to the secreted. Its subcellular location is the host nucleus. May regulate immune response to the intracellular capsid in acting as a T-cell tolerogen, by having an immunoregulatory effect which prevents destruction of infected cells by cytotoxic T-cells. This immune regulation may predispose to chronicity during perinatal infections and prevent severe liver injury during adult infections. The polypeptide is External core antigen (Hepatitis B virus genotype C subtype ayw (isolate China/Tibet127/2002) (HBV-C)).